The following is a 1485-amino-acid chain: ABC multidrug transporter I (1485 aa).

Disordered stretches follow at residues 1 to 57 (MDEK…EEFS) and 75 to 111 (KQIS…ALRG). The segment covering 8–24 (SESSNGSDVDSLSTASA) has biased composition (polar residues). N-linked (GlcNAc...) asparagine glycosylation occurs at asparagine 12. Positions 85–95 (GKTEDVERSDS) are enriched in basic and acidic residues. N-linked (GlcNAc...) asparagine glycans are attached at residues asparagine 132, asparagine 335, and asparagine 451. An ABC transporter 1 domain is found at 163 to 411 (MHMLGYGKKG…FESLGFKERP (249 aa)). Helical transmembrane passes span 522–542 (FAQT…GTVW), 556–576 (GGLL…ELVS), 600–620 (IAQI…FSII), 623–643 (FMCG…IIVL), 664–684 (YAMK…GYLI), 691–711 (EWLR…ALMV), and 774–794 (FGIM…HGET). Residues 846-1089 (FTWEDVCYDV…LLDYFRRNGA (244 aa)) form the ABC transporter 2 domain. 882–889 (GASGAGKT) is an ATP binding site. Helical transmembrane passes span 1184–1204 (YGFT…LAFL), 1211–1231 (ASLQ…AIIL), 1268–1288 (LPYS…IPGF), 1299–1319 (FLMV…ISAL), and 1325–1345 (IASQ…GVAI). Residues asparagine 1396 and asparagine 1418 are each glycosylated (N-linked (GlcNAc...) asparagine). Residues 1449-1469 (LGIFLAFIGSNLIILFLAVSF) traverse the membrane as a helical segment.

This sequence belongs to the ABC transporter superfamily. ABCG family. PDR (TC 3.A.1.205) subfamily.

The protein localises to the cell membrane. The catalysed reaction is fluconazole(in) + ATP + H2O = fluconazole(out) + ADP + phosphate + H(+). Its activity is regulated as follows. The efflux inhibitor FK506 does not impair the transport activity. Its function is as follows. ABC efflux transporter that confers resistance to fluconazole (FLC) but shows no resistance to other azoles. Is also able to transport rhodamine 6G (R-6G), a known substrate for many ABC transporters. The chain is ABC multidrug transporter I from Aspergillus fumigatus (strain ATCC MYA-4609 / CBS 101355 / FGSC A1100 / Af293) (Neosartorya fumigata).